A 97-amino-acid polypeptide reads, in one-letter code: DNA-binding protein NEQ150 (97 aa).

This sequence belongs to the PDCD5 family.

This Nanoarchaeum equitans (strain Kin4-M) protein is DNA-binding protein NEQ150.